We begin with the raw amino-acid sequence, 405 residues long: Replication factor C large subunit (405 aa).

ATP is bound at residue 47 to 54 (GPPGVGKT).

This sequence belongs to the activator 1 small subunits family. RfcL subfamily. In terms of assembly, heteromultimer composed of small subunits (RfcS) and large subunits (RfcL).

In terms of biological role, part of the RFC clamp loader complex which loads the PCNA sliding clamp onto DNA. The protein is Replication factor C large subunit of Saccharolobus islandicus (strain M.16.4 / Kamchatka #3) (Sulfolobus islandicus).